The sequence spans 621 residues: Rab proteins geranylgeranyltransferase component A 2 (621 aa).

The interval 113–171 is disordered; the sequence is VQDTETLQRSSPLEASATPADSLDSASLPKERQSAYSTSYEVPSRHTEESDRELSLPSA. The segment covering 115 to 125 has biased composition (polar residues); the sequence is DTETLQRSSPL. Over residues 155–166 the composition is skewed to basic and acidic residues; the sequence is PSRHTEESDREL.

It belongs to the Rab GDI family. Monomer. Heterotrimer composed of RABGGTA, RABGGTB and CHML; within this trimer, RABGGTA and RABGGTB form the catalytic component B, while CHML (component A) mediates Rab protein binding. Interacts with RAB1A, RAB7A and RAB27A, but has much lower affinity for RAB1A, RAB7A and RAB27A than CHM. Interacts with the non-phosphorylated forms of RAB3A, RAB3B, RAB3C, RAB3D, RAB5B, RAB5C, RAB8A, RAB8B, RAB10, RAB12, RAB35, and RAB43.

The protein resides in the cytoplasm. The protein localises to the cytosol. In terms of biological role, substrate-binding subunit (component A) of the Rab geranylgeranyltransferase (GGTase) complex. Binds unprenylated Rab proteins and presents the substrate peptide to the catalytic component B. The component A is thought to be regenerated by transferring its prenylated Rab back to the donor membrane. Less effective than CHM in supporting prenylation of Rab3 family. The chain is Rab proteins geranylgeranyltransferase component A 2 (Chml) from Mus musculus (Mouse).